The primary structure comprises 251 residues: L-xylulose reductase (251 aa).

Position 13–42 (13–42) interacts with NADP(+); that stretch reads LVTGASQGIGKEICLSLAKAGAQVIAFARN. Serine 143 contributes to the substrate binding site. Tyrosine 156 (proton acceptor) is an active-site residue. An NADP(+)-binding site is contributed by lysine 160.

The protein belongs to the short-chain dehydrogenases/reductases (SDR) family. Homotetramer. Expressed in intestine, gonad and spermatids (at protein level). Expressed in intestine, uterine seam, gonadal sheath cells, spermathecal-uterus valve and spermatids.

Its subcellular location is the cell membrane. It catalyses the reaction xylitol + NADP(+) = L-xylulose + NADPH + H(+). Strongly inhibited by 10% dimethyl sulfoxide. In terms of biological role, catalyzes the NADPH-dependent reduction of L-xylulose, D-xylulose, L-(+) erythrulose, D-erythrose, D-threose, L-ribulose, 1,4-dibromo-2,3-butanedione and 2,3-heptanedione. Also active against isatin, 9,10-phenanthrenequinone, menadione, 2,3-hexaenadione and 3,4-hexahenadione. No activity observed when tested using NADH rather than NADPH. The sequence is that of L-xylulose reductase from Caenorhabditis elegans.